The chain runs to 63 residues: Large ribosomal subunit protein uL29 (63 aa).

Belongs to the universal ribosomal protein uL29 family.

The polypeptide is Large ribosomal subunit protein uL29 (Bdellovibrio bacteriovorus (strain ATCC 15356 / DSM 50701 / NCIMB 9529 / HD100)).